A 161-amino-acid chain; its full sequence is F-box only protein 48 (161 aa).

Residues 1 to 25 form a disordered region; sequence MKKTSKKNNNFKIPGTELNSADAER. One can recognise an F-box domain in the interval 32 to 79; that stretch reads RNFVELLPLEVTYKIFSQLDIQSLCRASRTCTGWNCAIRNNDSLWKPH.

The sequence is that of F-box only protein 48 (Fbxo48) from Mus musculus (Mouse).